The sequence spans 115 residues: Probable non-functional immunoglobulin heavy variable 3-38-3 (115 aa).

A signal peptide spans 1 to 19 (MQFVLSWVFLVAILKGVQC). The framework-1 stretch occupies residues 20–44 (EVQLVESRGVLVQPGGSLRLSCAAS). Positions 31 to 115 (VQPGGSLRLS…EDTAVYYCKK (85 aa)) constitute an Ig-like domain. An intrachain disulfide couples C41 to C113. A complementarity-determining-1 region spans residues 45–52 (GFTVSSNE). The interval 53 to 69 (MSWVRQAPGKGLEWVSS) is framework-2. A complementarity-determining-2 region spans residues 70 to 75 (ISGGST). The tract at residues 76–113 (YYADSRKGRFTISRDNSKNTLHLQMNSLRAEDTAVYYC) is framework-3. Residues 114–115 (KK) are complementarity-determining-3.

In terms of assembly, immunoglobulins are composed of two identical heavy chains and two identical light chains; disulfide-linked.

It localises to the secreted. It is found in the cell membrane. In terms of biological role, probable non-functional open reading frame (ORF) of V region of the variable domain of immunoglobulin heavy chains. Non-functional ORF generally cannot participate in the synthesis of a productive immunoglobulin chain due to altered V-(D)-J or switch recombination and/or splicing site (at mRNA level) and/or conserved amino acid change (protein level). Immunoglobulins, also known as antibodies, are membrane-bound or secreted glycoproteins produced by B lymphocytes. In the recognition phase of humoral immunity, the membrane-bound immunoglobulins serve as receptors which, upon binding of a specific antigen, trigger the clonal expansion and differentiation of B lymphocytes into immunoglobulins-secreting plasma cells. Secreted immunoglobulins mediate the effector phase of humoral immunity, which results in the elimination of bound antigens. The antigen binding site is formed by the variable domain of one heavy chain, together with that of its associated light chain. Thus, each immunoglobulin has two antigen binding sites with remarkable affinity for a particular antigen. The variable domains are assembled by a process called V-(D)-J rearrangement and can then be subjected to somatic hypermutations which, after exposure to antigen and selection, allow affinity maturation for a particular antigen. The chain is Probable non-functional immunoglobulin heavy variable 3-38-3 from Homo sapiens (Human).